The following is a 274-amino-acid chain: Shikimate dehydrogenase (NADP(+)) (274 aa).

Shikimate is bound by residues 15 to 17 and Thr62; that span reads SKS. Residue Lys66 is the Proton acceptor of the active site. An NADP(+)-binding site is contributed by Asp78. Shikimate contacts are provided by Asn87 and Asp102. NADP(+) contacts are provided by residues 127–131 and Met215; that span reads GAGGA. Shikimate is bound at residue Tyr217. Residue Gly239 coordinates NADP(+).

Belongs to the shikimate dehydrogenase family. As to quaternary structure, homodimer.

It carries out the reaction shikimate + NADP(+) = 3-dehydroshikimate + NADPH + H(+). The protein operates within metabolic intermediate biosynthesis; chorismate biosynthesis; chorismate from D-erythrose 4-phosphate and phosphoenolpyruvate: step 4/7. Functionally, involved in the biosynthesis of the chorismate, which leads to the biosynthesis of aromatic amino acids. Catalyzes the reversible NADPH linked reduction of 3-dehydroshikimate (DHSA) to yield shikimate (SA). The polypeptide is Shikimate dehydrogenase (NADP(+)) (Dechloromonas aromatica (strain RCB)).